The sequence spans 212 residues: Small ribosomal subunit protein uS3 (212 aa).

A KH type-2 domain is found at 39–108 (IKNYIKERYK…EITISVVEVR (70 aa)).

This sequence belongs to the universal ribosomal protein uS3 family. Part of the 30S ribosomal subunit. Forms a tight complex with proteins S10 and S14.

Functionally, binds the lower part of the 30S subunit head. Binds mRNA in the 70S ribosome, positioning it for translation. This is Small ribosomal subunit protein uS3 from Aquifex aeolicus (strain VF5).